The following is a 147-amino-acid chain: Prefoldin subunit alpha (147 aa).

It belongs to the prefoldin subunit alpha family. As to quaternary structure, heterohexamer of two alpha and four beta subunits.

Its subcellular location is the cytoplasm. Its function is as follows. Molecular chaperone capable of stabilizing a range of proteins. Seems to fulfill an ATP-independent, HSP70-like function in archaeal de novo protein folding. The protein is Prefoldin subunit alpha (pfdA) of Saccharolobus solfataricus (strain ATCC 35092 / DSM 1617 / JCM 11322 / P2) (Sulfolobus solfataricus).